A 420-amino-acid chain; its full sequence is Glucose-1-phosphate adenylyltransferase (420 aa).

Residues tyrosine 107, glycine 173, 188–189 (EK), and serine 206 each bind alpha-D-glucose 1-phosphate.

Belongs to the bacterial/plant glucose-1-phosphate adenylyltransferase family. In terms of assembly, homotetramer.

The enzyme catalyses alpha-D-glucose 1-phosphate + ATP + H(+) = ADP-alpha-D-glucose + diphosphate. The protein operates within glycan biosynthesis; glycogen biosynthesis. In terms of biological role, involved in the biosynthesis of ADP-glucose, a building block required for the elongation reactions to produce glycogen. Catalyzes the reaction between ATP and alpha-D-glucose 1-phosphate (G1P) to produce pyrophosphate and ADP-Glc. In Shewanella oneidensis (strain ATCC 700550 / JCM 31522 / CIP 106686 / LMG 19005 / NCIMB 14063 / MR-1), this protein is Glucose-1-phosphate adenylyltransferase.